The chain runs to 170 residues: Ribosome maturation factor RimM (170 aa).

The PRC barrel domain occupies 97 to 170; it reads NADEYYWVDL…LVVVDWDPEF (74 aa).

This sequence belongs to the RimM family. Binds ribosomal protein uS19.

It is found in the cytoplasm. An accessory protein needed during the final step in the assembly of 30S ribosomal subunit, possibly for assembly of the head region. Essential for efficient processing of 16S rRNA. May be needed both before and after RbfA during the maturation of 16S rRNA. It has affinity for free ribosomal 30S subunits but not for 70S ribosomes. The protein is Ribosome maturation factor RimM of Stenotrophomonas maltophilia (strain R551-3).